Consider the following 319-residue polypeptide: Protease HtpX homolog (319 aa).

Transmembrane regions (helical) follow at residues 3–23 (LTVLALIGGYIVVLGVAAWAL) and 32–52 (TGVAFMLSLLALAMVLVQWLF). Residue His-134 participates in Zn(2+) binding. Glu-135 is a catalytic residue. His-138 contributes to the Zn(2+) binding site. The next 2 helical transmembrane spans lie at 146–166 (VILALSLIPIAAFLIGRTLVW) and 182–202 (MALVAVGAALLAAGMVFQLIV). Residue Glu-210 coordinates Zn(2+).

It belongs to the peptidase M48B family. Zn(2+) is required as a cofactor.

The protein resides in the cell membrane. This chain is Protease HtpX homolog, found in Aeropyrum pernix (strain ATCC 700893 / DSM 11879 / JCM 9820 / NBRC 100138 / K1).